An 87-amino-acid polypeptide reads, in one-letter code: Potassium channel toxin Tdi-beta-KTx (87 aa).

A signal peptide spans 1 to 19 (MERKLALLLLLGMITLASS). Residues 20 to 27 (GLREKHVQ) constitute a propeptide that is removed on maturation. In terms of domain architecture, BetaSPN-type CS-alpha/beta spans 53 to 87 (QFGCPAYEGYCMNHCQDIERHDGSCHGFKCKCEKS). 3 disulfide bridges follow: Cys-56/Cys-77, Cys-63/Cys-82, and Cys-67/Cys-84.

In terms of tissue distribution, expressed by the venom gland.

The protein resides in the secreted. Inhibits voltage-gated potassium channel. This Tityus discrepans (Venezuelan scorpion) protein is Potassium channel toxin Tdi-beta-KTx.